Here is a 180-residue protein sequence, read N- to C-terminus: Large ribosomal subunit protein uL6 (180 aa).

Belongs to the universal ribosomal protein uL6 family. As to quaternary structure, part of the 50S ribosomal subunit.

Functionally, this protein binds to the 23S rRNA, and is important in its secondary structure. It is located near the subunit interface in the base of the L7/L12 stalk, and near the tRNA binding site of the peptidyltransferase center. The polypeptide is Large ribosomal subunit protein uL6 (Clostridium botulinum (strain Langeland / NCTC 10281 / Type F)).